The sequence spans 1382 residues: Histone-lysine N-methyltransferase SUVR5 (1382 aa).

Disordered stretches follow at residues 43–62 (TVTGPIGKNGEGESSPSEPK) and 354–373 (GNTNSPETMKEENPVMNTPE). 3 C2H2-type zinc fingers span residues 735 to 758 (FACAICLDSFVRRKLLEIHVEERH), 769 to 792 (LQCIPCGSHFGDKEQLLVHVQAVH), and 838 to 861 (FVCKFCGLKFNLLPDLGRHHQAEH). Residues 915–935 (RRMQGSKSLGTEGNTEAGVSP) form a disordered region. Polar residues predominate over residues 919–928 (GSKSLGTEGN). The 77-residue stretch at 1145–1221 (LRCSCRSSVC…TCQNRVLQNG (77 aa)) folds into the Pre-SET domain. 9 residues coordinate Zn(2+): cysteine 1147, cysteine 1149, cysteine 1154, cysteine 1159, cysteine 1182, cysteine 1203, cysteine 1207, cysteine 1209, and cysteine 1213. The region spanning 1224-1356 (AKLEVFRTES…AGEEITRDYG (133 aa)) is the SET domain. Residues 1234–1236 (KGW), tyrosine 1277, and 1313–1314 (NH) each bind S-adenosyl-L-methionine. A Zn(2+)-binding site is contributed by cysteine 1316. Tyrosine 1355 contacts S-adenosyl-L-methionine. Residues 1366–1382 (NEHPCHCKATNCRGLLS) enclose the Post-SET domain. 3 residues coordinate Zn(2+): cysteine 1370, cysteine 1372, and cysteine 1377.

It belongs to the class V-like SAM-binding methyltransferase superfamily. Component of a regulatory complex with LDL1/SWP1. Interacts with LDL1/SWP1.

It is found in the nucleus. It localises to the chromosome. It catalyses the reaction L-lysyl-[histone] + S-adenosyl-L-methionine = N(6)-methyl-L-lysyl-[histone] + S-adenosyl-L-homocysteine + H(+). Functionally, histone methyltransferase that functions together with its binding partner LDL1/SWP1 as one of the regulators of flower timing in Arabidopsis. Mediates H3K9me2 deposition and regulates gene expression in a DNA methylation-independent manner. Binds DNA through its zinc fingers and represses the expression of a subset of stimulus response genes. May represent a novel mechanism for plants to regulate their chromatin and transcriptional state, which may allow for the adaptability and modulation necessary to rapidly respond to environment or developmental cues. The sequence is that of Histone-lysine N-methyltransferase SUVR5 from Arabidopsis thaliana (Mouse-ear cress).